The chain runs to 134 residues: UPF0102 protein Dshi_2830 (134 aa).

This sequence belongs to the UPF0102 family.

This is UPF0102 protein Dshi_2830 from Dinoroseobacter shibae (strain DSM 16493 / NCIMB 14021 / DFL 12).